The chain runs to 670 residues: G-protein coupled receptor moody (670 aa).

Topologically, residues 1-40 (MSDETTISLEDGYPPLEALTTMVPPADATGFSQSLLTFAA) are extracellular. A helical membrane pass occupies residues 41–61 (VMTFLIMIVGICGNLLTVVAL). The Cytoplasmic portion of the chain corresponds to 62-69 (LKCPKVRN). Residues 70-90 (VAAAFIISLCIADLLFCALVL) form a helical membrane-spanning segment. The Extracellular portion of the chain corresponds to 91 to 111 (PFQGLRFVQGTWRHGQVLCRL). Residues cysteine 109 and cysteine 188 are joined by a disulfide bond. The helical transmembrane segment at 112–132 (IPFIQYGNIGVSLLCIAMITI) threads the bilayer. At 133–152 (NRYVMITHHGLYARIYKRHW) the chain is on the cytoplasmic side. A helical membrane pass occupies residues 153-173 (IAVMIAACWLFSYGMQLPTLL). The Extracellular segment spans residues 174–202 (GEWGRFGYDSRLQTCSIMTDDHGHSSKTT). Residues 203–223 (LFITAFVIPCLVIIACYAKIF) form a helical membrane-spanning segment. The Cytoplasmic segment spans residues 224 to 313 (WVVHKSEQRL…AKRNEWRITK (90 aa)). Positions 258-302 (LPSGAECQPSNRVSSDSSSSFSIDVPETAPSGKQQPTRVKDQREV) are disordered. Residues 267 to 279 (SNRVSSDSSSSFS) show a composition bias toward low complexity. The chain crosses the membrane as a helical span at residues 314-334 (MVLAIFLSFVVCYLPITIVKV). The Extracellular portion of the chain corresponds to 335 to 345 (ADKNVEHPSLH). A helical transmembrane segment spans residues 346–366 (ICSYILLYLSACINPIIYVIM). Residues 367 to 670 (NKQYRKAYKT…LTAKMKFPKD (304 aa)) are Cytoplasmic-facing. Disordered stretches follow at residues 461–490 (DLIS…GSNS), 562–622 (ELPP…YMNV), and 636–670 (TNAV…FPKD). Pro residues predominate over residues 564–584 (PPTPPATSAPTTPAPPPPSSP). Over residues 585–598 (LHPLSTDSSTTTIS) the composition is skewed to low complexity. The segment covering 646-660 (GPANTSATVSISGSK) has biased composition (polar residues).

This sequence belongs to the G-protein coupled receptor 1 family. Isoform A and isoform B are expressed in the head. Isoform B only is expressed in the body. Expressed in embryonic glial cells that are involved in ensheathment and insulation of the nervous system. Both isoforms are expressed in glia that insulate the larval and adult nervous system. Also expressed in the germ cells, the gut, and the heart.

Its subcellular location is the cell membrane. Its function is as follows. Isoform A and isoform B are required in glia to regulate the acute sensitivity to cocaine and to continuously maintain the proper blood-brain barrier (BBB) function. A moody-mediated signaling pathway functions in glia to regulate nervous system insulation and drug-related behaviors. Galphai and Galphao, and the regulator of G protein signaling, loco, are required in the surface glia to achieve effective insulation. The components function by regulating the cortical actin and thereby stabilizing the extended morphology of the surface glia, which in turn is necessary for the formation of septate junctions of sufficient length to achieve proper sealing of the nerve cord. This chain is G-protein coupled receptor moody, found in Drosophila melanogaster (Fruit fly).